We begin with the raw amino-acid sequence, 941 residues long: Replicative DNA helicase DnaB (941 aa).

Residues 1–25 (MAEFEERPRLSIGEEEAPPYPLEKL) form a disordered region. The SF4 helicase; first part domain occupies 214–484 (RPGGITGVPS…PVYRLTTRLG (271 aa)). Residue 245-252 (ARPSMGKT) participates in ATP binding. In terms of domain architecture, DOD-type homing endonuclease spans 534 to 683 (LLGHLIGDGC…VQSLLLRLGI (150 aa)). An SF4 helicase; second part domain is found at 646-915 (DGCIQMRRGK…ARFENLTMYQ (270 aa)). Positions 914–941 (YQPEPGTPLPETPDETILPSGPPDEAPF) are disordered.

Belongs to the helicase family. DnaB subfamily. In terms of assembly, homohexamer. Post-translationally, upon expression in E.coli this protein undergoes self splicing that involves a post-translational excision of the intervening region (intein) followed by peptide ligation.

It carries out the reaction Couples ATP hydrolysis with the unwinding of duplex DNA at the replication fork by translocating in the 5'-3' direction. This creates two antiparallel DNA single strands (ssDNA). The leading ssDNA polymer is the template for DNA polymerase III holoenzyme which synthesizes a continuous strand.. The catalysed reaction is ATP + H2O = ADP + phosphate + H(+). Functionally, the main replicative DNA helicase, it participates in initiation and elongation during chromosome replication. Travels ahead of the DNA replisome, separating dsDNA into templates for DNA synthesis. A processive ATP-dependent 5'-3' DNA helicase it has DNA-dependent ATPase activity. The intein is an endonuclease. In Rhodothermus marinus (Rhodothermus obamensis), this protein is Replicative DNA helicase DnaB.